We begin with the raw amino-acid sequence, 479 residues long: B-cell CLL/lymphoma 6 member B protein (479 aa).

The 68-residue stretch at 38-105 folds into the BTB domain; it reads TDVTLLVGGQ…MYTSRLRLSP (68 aa). 2 disordered regions span residues 143–190 and 210–259; these read RPLE…PDPK and GSLV…LSPT. A compositionally biased stretch (pro residues) spans 147–160; the sequence is AEPPTPPTAPPPGS. The segment covering 162–172 has biased composition (basic and acidic residues); the sequence is RRSEGHPDPPT. Residues 234–244 are compositionally biased toward low complexity; it reads SSSSSSSSSSS. 5 consecutive C2H2-type zinc fingers follow at residues 328–350, 356–378, 384–406, 412–434, and 440–463; these read YKCQ…RTVH, YHCS…SRIH, YKCE…VLIH, YPCP…VRIH, and YHCD…RQKH.

Associates with BCL6 through the BTB domain. In terms of tissue distribution, ubiquitously expressed with higher expression found in heart and placenta.

Its subcellular location is the nucleus. Acts as a sequence-specific transcriptional repressor in association with BCL6. May function in a narrow stage or be related to some events in the early B-cell development. In Homo sapiens (Human), this protein is B-cell CLL/lymphoma 6 member B protein (BCL6B).